The chain runs to 555 residues: Probable apyrase 6 (555 aa).

Basic residues predominate over residues 1–10 (MRRSHARSRV). The interval 1-45 (MRRSHARSRVKNSSSSKSDMDPIKFQIRSGNRAPSSSSTYTLTKP) is disordered. Topologically, residues 1-55 (MRRSHARSRVKNSSSSKSDMDPIKFQIRSGNRAPSSSSTYTLTKPNSKHAKSNLL) are cytoplasmic. Residues 28-45 (RSGNRAPSSSSTYTLTKP) are compositionally biased toward polar residues. A helical transmembrane segment spans residues 56–76 (LTVGSISVVLGVLFLCYSILF). The Extracellular portion of the chain corresponds to 77–512 (SGGNLRGSLR…HALFSNHPKT (436 aa)). 89–99 (VVIDGGSTGTR) contributes to the ATP binding site. The active-site Proton acceptor is the E212. ATP is bound at residue 236 to 246 (GIVELGGASAQ). N-linked (GlcNAc...) asparagine glycosylation is found at N267 and N348. The helical transmembrane segment at 513 to 533 (LHYLIGIPILMTVLVYLVTKW) threads the bilayer. At 534 to 555 (RKPQLKTIYDLEKGRYIVTRIR) the chain is on the cytoplasmic side.

It belongs to the GDA1/CD39 NTPase family. Requires Ca(2+) as cofactor. In terms of tissue distribution, detected in mature pollen grains (at the protein level). Also expressed in the veins and hydathode regions of rosette leaves.

The protein resides in the cytoplasmic vesicle membrane. The enzyme catalyses a ribonucleoside 5'-triphosphate + 2 H2O = a ribonucleoside 5'-phosphate + 2 phosphate + 2 H(+). In terms of biological role, catalyzes the hydrolysis of phosphoanhydride bonds of nucleoside tri- and di-phosphates. Involved in the regulation of pollen and anther development. The sequence is that of Probable apyrase 6 (APY6) from Arabidopsis thaliana (Mouse-ear cress).